The chain runs to 479 residues: Glutamate--tRNA ligase (479 aa).

A 'HIGH' region motif is present at residues 9–19 (PSPTGNLHIGT). The short motif at 243-247 (KLSKR) is the 'KMSKS' region element. Residue lysine 246 participates in ATP binding.

Belongs to the class-I aminoacyl-tRNA synthetase family. Glutamate--tRNA ligase type 1 subfamily. In terms of assembly, monomer.

The protein localises to the cytoplasm. The enzyme catalyses tRNA(Glu) + L-glutamate + ATP = L-glutamyl-tRNA(Glu) + AMP + diphosphate. In terms of biological role, catalyzes the attachment of glutamate to tRNA(Glu) in a two-step reaction: glutamate is first activated by ATP to form Glu-AMP and then transferred to the acceptor end of tRNA(Glu). The polypeptide is Glutamate--tRNA ligase (Synechococcus sp. (strain JA-2-3B'a(2-13)) (Cyanobacteria bacterium Yellowstone B-Prime)).